The sequence spans 206 residues: Transmembrane emp24 domain-containing protein bai (206 aa).

The first 20 residues, 1 to 20, serve as a signal peptide directing secretion; it reads MARTLLILCTLMAWAWTGEA. Over 21–172 the chain is Lumenal; it reads VMFKLTPNTQ…RDTNEKTNSR (152 aa). Residues 30-140 form the GOLD domain; the sequence is QKCLKEDIQA…LKPLEVDLKR (111 aa). The chain crosses the membrane as a helical span at residues 173–193; sequence VLFFSIFSMCCLLGLATWQVL. Topologically, residues 194 to 206 are cytoplasmic; sequence YLRRYFKAKKLIE.

The protein belongs to the EMP24/GP25L family.

It localises to the membrane. Its function is as follows. Eca and bai are essential, though not redundant, for dorsoventral patterning of the embryo. Specifically required during early embryogenesis for the activity of maternal tkv, while the zygotic tkv is not affected. The polypeptide is Transmembrane emp24 domain-containing protein bai (Drosophila ananassae (Fruit fly)).